We begin with the raw amino-acid sequence, 87 residues long: Cuticle protein 1 (87 aa).

Gln1 carries the pyrrolidone carboxylic acid modification. Repeat copies occupy residues 5–20 (YPAG…YPNC), 43–58 (YPAG…YPFC), and 71–86 (YPAG…YPYC). 3 disulfides stabilise this stretch: Cys14-Cys20, Cys52-Cys58, and Cys80-Cys86.

This Blaberus craniifer (Death's head cockroach) protein is Cuticle protein 1.